Here is a 308-residue protein sequence, read N- to C-terminus: MQTTLKIGTRGSPLALAQAHETQARLMAAHGLPAEAFEVVVISTSGDRIQDRPLSEAGGKGLFTKEIEEALLAGAIDIAVHSSKDMPTQLPDGLELSAFLPREDARDAFVGKAAKTIADLLRGAKVGSSSLRRQALIRRMRPDLDVVMFRGNVQTRLRKLDEGVAAGTILAYAGLKRLGLEHVATDLMPLDIFPPAPGQGAIGIETRIGDRAVEKMLVAIHDVPTGQALACERAFLAALDGSCRTPIAGHATIETGNLSFAGLIISPDGTQSHTVELQGPAQDAARIGDEAARTVRAKAGEKFFDGWV.

At cysteine 243 the chain carries S-(dipyrrolylmethanemethyl)cysteine.

The protein belongs to the HMBS family. In terms of assembly, monomer. It depends on dipyrromethane as a cofactor.

It carries out the reaction 4 porphobilinogen + H2O = hydroxymethylbilane + 4 NH4(+). Its pathway is porphyrin-containing compound metabolism; protoporphyrin-IX biosynthesis; coproporphyrinogen-III from 5-aminolevulinate: step 2/4. Its function is as follows. Tetrapolymerization of the monopyrrole PBG into the hydroxymethylbilane pre-uroporphyrinogen in several discrete steps. This Mesorhizobium japonicum (strain LMG 29417 / CECT 9101 / MAFF 303099) (Mesorhizobium loti (strain MAFF 303099)) protein is Porphobilinogen deaminase.